The chain runs to 196 residues: V-type proton ATPase subunit E (196 aa).

The protein belongs to the V-ATPase E subunit family.

Its function is as follows. Produces ATP from ADP in the presence of a proton gradient across the membrane. In Clostridium botulinum (strain Eklund 17B / Type B), this protein is V-type proton ATPase subunit E.